The following is an 84-amino-acid chain: MDNNVDTITLTDEEGKETEFEVITKLDIEDKEYVVVVPKNEEVDEAIALRIDNNDNGEEMLVPVEEDEEFNMVAEAYELLFSEE.

It belongs to the UPF0473 family.

This is UPF0473 protein CLJ_B2791 from Clostridium botulinum (strain 657 / Type Ba4).